A 772-amino-acid chain; its full sequence is Rho guanine nucleotide exchange factor 6 (772 aa).

Residues 1-111 form the Calponin-homology (CH) domain; the sequence is MNPEERVVTW…TLLAVNKATE (111 aa). A disordered region spans residues 115–158; sequence SERPCGRSSSLSATTSSQTNPQAAVPSTTPEQQSEEKAAEMTEN. The segment covering 122–133 has biased composition (low complexity); the sequence is SSSLSATTSSQT. At serine 126 the chain carries Phosphoserine. Residue threonine 133 is modified to Phosphothreonine. Polar residues predominate over residues 134–146; the sequence is NPQAAVPSTTPEQ. An SH3 domain is found at 160 to 219; sequence SHQLIVKARFNFKQTNEDELSVCKGDIIYVTRVEEGGWWEGTLNGRTGWFPSNYVREIKP. Phosphoserine is present on serine 225. One can recognise a DH domain in the interval 241–421; the sequence is YYTVVLQNIL…KSLMGQCQDL (181 aa). In terms of domain architecture, PH spans 443-548; that stretch reads DIKTLGNVIF…WMEQLNRLTK (106 aa). Residue serine 488 is modified to Phosphoserine. Low complexity predominate over residues 557-573; the sequence is SKTSSSSCSTHSSFSST. Positions 557–581 are disordered; the sequence is SKTSSSSCSTHSSFSSTGQPRGPLE. Serine 640 and serine 680 each carry phosphoserine.

In terms of assembly, interacts with PAK kinases through the SH3 domain. Interacts with GIT1. Interacts with PARVB. Component of cytoplasmic complexes, which also contain PXN, GIT1 and PAK1. Interacts with BIN2. Identified in a complex with BIN2 and GIT2. Interacts with PARVG; the guanine nucleotide exchange factor activity of ARHGEF6 is essential for PARVG-induced enhancement of cell spreading.

Its subcellular location is the cell projection. It is found in the lamellipodium. Its function is as follows. Acts as a RAC1 guanine nucleotide exchange factor (GEF). The sequence is that of Rho guanine nucleotide exchange factor 6 (Arhgef6) from Rattus norvegicus (Rat).